The following is a 140-amino-acid chain: Holo-[acyl-carrier-protein] synthase (140 aa).

Mg(2+) is bound by residues Asp8 and Glu62.

This sequence belongs to the P-Pant transferase superfamily. AcpS family. Mg(2+) serves as cofactor.

The protein resides in the cytoplasm. It catalyses the reaction apo-[ACP] + CoA = holo-[ACP] + adenosine 3',5'-bisphosphate + H(+). Its function is as follows. Transfers the 4'-phosphopantetheine moiety from coenzyme A to a Ser of acyl-carrier-protein. The sequence is that of Holo-[acyl-carrier-protein] synthase from Cupriavidus pinatubonensis (strain JMP 134 / LMG 1197) (Cupriavidus necator (strain JMP 134)).